We begin with the raw amino-acid sequence, 225 residues long: MNSIEFPLFHRTTQNSVISTTLNDLSNWSRLSSLWPLLYGTSCCFIEFASLIGSRFDFDRYGLVPRSSPRQADLILTAGTVTMKMAPSLVRLYEQMPEPKYVIAMGACTITGGMFSTDSYSTVRGVDKLIPVDVYLPGCPPKPEAIIDAITKLRKKISREIYPDRILSQRENRCFTTNHKFQVGHSIHTGNYDQGFLYQPPSTSEIPPETFFKYKSSVSSHELVN.

4 residues coordinate [4Fe-4S] cluster: Cys-43, Cys-44, Cys-108, and Cys-139.

The protein belongs to the complex I 20 kDa subunit family. In terms of assembly, NDH is composed of at least 16 different subunits, 5 of which are encoded in the nucleus. Requires [4Fe-4S] cluster as cofactor.

It is found in the plastid. It localises to the chloroplast thylakoid membrane. It carries out the reaction a plastoquinone + NADH + (n+1) H(+)(in) = a plastoquinol + NAD(+) + n H(+)(out). It catalyses the reaction a plastoquinone + NADPH + (n+1) H(+)(in) = a plastoquinol + NADP(+) + n H(+)(out). Functionally, NDH shuttles electrons from NAD(P)H:plastoquinone, via FMN and iron-sulfur (Fe-S) centers, to quinones in the photosynthetic chain and possibly in a chloroplast respiratory chain. The immediate electron acceptor for the enzyme in this species is believed to be plastoquinone. Couples the redox reaction to proton translocation, and thus conserves the redox energy in a proton gradient. The sequence is that of NAD(P)H-quinone oxidoreductase subunit K, chloroplastic from Guizotia abyssinica (Niger).